The following is a 1071-amino-acid chain: MKLIYTEMSYSMTEILVNEARKAADQGYRVFYIAPNSLSFEKEREVLTLLPERGTFSIIVTRFVQMSRYFTVESSPSKQHLDDTTLAMIFYRALMQLKPEDLPSYGRLQNNSVFIEQLVELYKELKNAQLSVHDLTGLDHPQKQEDLIKIIELAETIMIQQDYNQDSPLQSFARAIKLGLLNNQLSKTVIVIDGFSRFSAEEDYLLSLLNNNCQEVIIGSYVSQKAYQKSFIKGNIYEASLHFLQDLAQKYHIKPVFATSNQVFKPAFSRLTQLFEATHDFSQVDWQLQKNDLDHFSLWQCHHQKEEIEHVAKSIRQKLYEGYRYKDILVLLGDMDAYQLQIGPIFDKFEIPYYLGKAEPMAAHPLVQFIESLERSQRYNWRREDILNMLKSGLFGCFDDSDIDRFEEYTQFADIKGFTKFSKPFTINSSRQYPLDFLNEMRQDIVLPLQELFKSQKQLGASLIDKLILFLEKIRLAENMQGLAQSQLEVEKNEEVWKRFTDILTSFHHIFGQEKLRLSDCLALIKTGMKSAQYRVVPATLDVVTIKSYDLVQPHSKPFVYAIGLTQSHFPKQIHHSGLLSDQERARINEIRNYRHFDIASAENSKKNHQTALSLFNAATKELVLSVPTVINETFDDLSPYLKELINFGLPLLDKGKNYLSYDNSDIGNYKALLSQIIAINRQDLIEMSDQDKMFWTVVLRYLRKQLRKQQLELPTSDYRLSTKPLSKEVIEVCFPKGIPLKLSATALTVFYNNQYNYFLKYVLNLNKTESIHPDSRIHGQYLHRVFERLMKDHTQEPFDNKLKQAIYHTNQESFFQQVYQDNAEAEYSLAILEDIVRSTAPILQLNQNIKVIDQEKNFHLDMGNEILVHGIIDRIDQLSDGSLGIVDYKSSANQFDIGTFYNGLSPQLVTYLAALKQIAPHDINQLFGAMYLHLQDPKLDLVTFKQIDNTLVESIYKALTYKGIFSEVEKEHLSTGAYQTKNALYSNDELETLLNYNKYLYLKAAKHIKKGHFLINPYTSDGKTVQGDQLKAITRFEADLDMAQARRLVTLPAKEKKECFLTLMRKESHL.

Belongs to the helicase family. AddB/RexB type 2 subfamily. As to quaternary structure, heterodimer of AddA and RexB. Requires Mg(2+) as cofactor.

Functionally, the heterodimer acts as both an ATP-dependent DNA helicase and an ATP-dependent, dual-direction single-stranded exonuclease. Recognizes the chi site generating a DNA molecule suitable for the initiation of homologous recombination. This subunit has 5' -&gt; 3' nuclease activity but not helicase activity. The chain is ATP-dependent helicase/deoxyribonuclease subunit B from Streptococcus pyogenes serotype M12 (strain MGAS2096).